We begin with the raw amino-acid sequence, 837 residues long: Protein translocase subunit SecA (837 aa).

ATP is bound by residues Gln-83, 101 to 105 (GEGKT), and Asp-494.

It belongs to the SecA family. Monomer and homodimer. Part of the essential Sec protein translocation apparatus which comprises SecA, SecYEG and auxiliary proteins SecDF. Other proteins may also be involved.

Its subcellular location is the cell membrane. It localises to the cytoplasm. It carries out the reaction ATP + H2O + cellular proteinSide 1 = ADP + phosphate + cellular proteinSide 2.. Functionally, part of the Sec protein translocase complex. Interacts with the SecYEG preprotein conducting channel. Has a central role in coupling the hydrolysis of ATP to the transfer of proteins into and across the cell membrane, serving as an ATP-driven molecular motor driving the stepwise translocation of polypeptide chains across the membrane. This Ureaplasma parvum serovar 3 (strain ATCC 27815 / 27 / NCTC 11736) protein is Protein translocase subunit SecA.